A 134-amino-acid polypeptide reads, in one-letter code: DNA-binding protein inhibitor ID-2 (134 aa).

Residues M1 to R24 form a disordered region. 2 positions are modified to phosphoserine: S14 and S25. The 53-residue stretch at S23–L75 folds into the bHLH domain. The Nuclear export signal signature appears at L106–L115.

Interacts with GATA4 and NKX2-5. Interacts with NR0B2. Interacts with CLOCK and BMAL1. Interacts with IFI204. Interacts with NEDD9/HEF1. Interacts with ASB4; this interaction promotes ID2 proteasomal degradation. In terms of processing, ubiquitinated in a ASB4-depedent manner, leading to proteasomal degradation. Phosphorylated in vitro by CDK1, PKA and PKC.

It localises to the cytoplasm. The protein localises to the nucleus. Transcriptional regulator (lacking a basic DNA binding domain) which negatively regulates the basic helix-loop-helix (bHLH) transcription factors by forming heterodimers and inhibiting their DNA binding and transcriptional activity. Implicated in regulating a variety of cellular processes, including cellular growth, senescence, differentiation, apoptosis, angiogenesis, and neoplastic transformation. Inhibits skeletal muscle and cardiac myocyte differentiation. Regulates the circadian clock by repressing the transcriptional activator activity of the CLOCK-BMAL1 heterodimer. Restricts the CLOCK and BMAL1 localization to the cytoplasm. Plays a role in both the input and output pathways of the circadian clock: in the input component, is involved in modulating the magnitude of photic entrainment and in the output component, contributes to the regulation of a variety of liver clock-controlled genes involved in lipid metabolism. In Bos taurus (Bovine), this protein is DNA-binding protein inhibitor ID-2 (ID2).